The primary structure comprises 410 residues: Neuroserpin (410 aa).

The first 16 residues, M1 to V16, serve as a signal peptide directing secretion. N-linked (GlcNAc...) asparagine glycosylation is found at N157, N321, and N401. O-linked (Xyl...) (chondroitin sulfate) serine glycosylation occurs at S403.

This sequence belongs to the serpin family. Detected in neurons in embryonic brain cortex (at protein level). During embryonic development mostly expressed in CNS. In adult expressed in brain and much less in spinal cord, heart, kidney and testis.

It localises to the secreted. The protein resides in the cytoplasmic vesicle. It is found in the secretory vesicle lumen. Its subcellular location is the perikaryon. In terms of biological role, serine protease inhibitor that inhibits plasminogen activators and plasmin but not thrombin. May be involved in the formation or reorganization of synaptic connections as well as for synaptic plasticity in the adult nervous system. May protect neurons from cell damage by tissue-type plasminogen activator. The sequence is that of Neuroserpin (Serpini1) from Mus musculus (Mouse).